A 215-amino-acid polypeptide reads, in one-letter code: Probable ribosome-binding factor A, chloroplastic (215 aa).

Residues 1–52 constitute a chloroplast transit peptide; that stretch reads MPNLLHTNQSHFFFLHHPPIYTVSSKTQAFHFPQSMAPVNLRTNLSVRRTVR. Residues 183 to 192 show a composition bias toward basic and acidic residues; that stretch reads KGSGEGKTEP. Positions 183–210 are disordered; that stretch reads KGSGEGKTEPSDSTEDDQDWEVDDPDED. Acidic residues predominate over residues 194–210; sequence DSTEDDQDWEVDDPDED.

It belongs to the RbfA family.

The protein localises to the plastid. It is found in the chloroplast. The protein is Probable ribosome-binding factor A, chloroplastic of Arabidopsis thaliana (Mouse-ear cress).